A 108-amino-acid polypeptide reads, in one-letter code: ATP-dependent Clp protease adapter protein ClpS (108 aa).

The protein belongs to the ClpS family. As to quaternary structure, binds to the N-terminal domain of the chaperone ClpA.

Functionally, involved in the modulation of the specificity of the ClpAP-mediated ATP-dependent protein degradation. This Cupriavidus necator (strain ATCC 17699 / DSM 428 / KCTC 22496 / NCIMB 10442 / H16 / Stanier 337) (Ralstonia eutropha) protein is ATP-dependent Clp protease adapter protein ClpS.